The primary structure comprises 335 residues: S-adenosylmethionine decarboxylase proenzyme (335 aa).

Catalysis depends on residues E12 and E15. The active-site Schiff-base intermediate with substrate; via pyruvic acid is the S70. S70 is subject to Pyruvic acid (Ser); by autocatalysis. C84 acts as the Proton donor; for catalytic activity in catalysis. Catalysis depends on proton acceptor; for processing activity residues S231 and H245.

This sequence belongs to the eukaryotic AdoMetDC family. It depends on pyruvate as a cofactor. In terms of processing, is synthesized initially as an inactive proenzyme. Formation of the active enzyme involves a self-maturation process in which the active site pyruvoyl group is generated from an internal serine residue via an autocatalytic post-translational modification. Two non-identical subunits are generated from the proenzyme in this reaction, and the pyruvate is formed at the N-terminus of the alpha chain, which is derived from the carboxyl end of the proenzyme. The post-translation cleavage follows an unusual pathway, termed non-hydrolytic serinolysis, in which the side chain hydroxyl group of the serine supplies its oxygen atom to form the C-terminus of the beta chain, while the remainder of the serine residue undergoes an oxidative deamination to produce ammonia and the pyruvoyl group blocking the N-terminus of the alpha chain.

It carries out the reaction S-adenosyl-L-methionine + H(+) = S-adenosyl 3-(methylsulfanyl)propylamine + CO2. It functions in the pathway amine and polyamine biosynthesis; S-adenosylmethioninamine biosynthesis; S-adenosylmethioninamine from S-adenosyl-L-methionine: step 1/1. Functionally, essential for biosynthesis of the polyamines spermidine and spermine. Promotes maintenance and self-renewal of embryonic stem cells, by maintaining spermine levels. This is S-adenosylmethionine decarboxylase proenzyme (amd1) from Xenopus laevis (African clawed frog).